A 152-amino-acid polypeptide reads, in one-letter code: Snaclec coagulation factor IX/factor X-binding protein subunit A (152 aa).

The N-terminal stretch at 1 to 23 is a signal peptide; sequence MGRFIFMSFGLLVVAASLRGTGA. Residues 24 to 152 enclose the C-type lectin domain; the sequence is DCLSGWSSYE…GQQNPFVCEA (129 aa). 3 disulfide bridges follow: C25–C36, C53–C150, and C125–C142. S64, E66, and E70 together coordinate Ca(2+). E151 provides a ligand contact to Ca(2+).

This sequence belongs to the snaclec family. In terms of assembly, heterodimer of subunits A and B; disulfide-linked. As to expression, expressed by the venom gland.

It is found in the secreted. Anticoagulant protein which binds to the gamma-carboxyglutamic acid-domain regions of factors IX (F9) and factor X (F10) in the presence of calcium with a 1 to 1 stoichiometry. The protein is Snaclec coagulation factor IX/factor X-binding protein subunit A of Protobothrops flavoviridis (Habu).